The following is a 171-amino-acid chain: Probable chorismate pyruvate-lyase (171 aa).

Substrate is bound by residues Met36, Arg78, Leu116, and Glu157.

The protein belongs to the UbiC family.

Its subcellular location is the cytoplasm. It catalyses the reaction chorismate = 4-hydroxybenzoate + pyruvate. It participates in cofactor biosynthesis; ubiquinone biosynthesis. Its function is as follows. Removes the pyruvyl group from chorismate, with concomitant aromatization of the ring, to provide 4-hydroxybenzoate (4HB) for the ubiquinone pathway. The polypeptide is Probable chorismate pyruvate-lyase (Bartonella henselae (strain ATCC 49882 / DSM 28221 / CCUG 30454 / Houston 1) (Rochalimaea henselae)).